Consider the following 471-residue polypeptide: V-type ATP synthase beta chain (471 aa).

The protein belongs to the ATPase alpha/beta chains family.

Its function is as follows. Produces ATP from ADP in the presence of a proton gradient across the membrane. The V-type beta chain is a regulatory subunit. The protein is V-type ATP synthase beta chain of Streptococcus pyogenes serotype M18 (strain MGAS8232).